The following is a 104-amino-acid chain: MAVTGIENVLQQLQATALSAANGTPQDGVAQGTFSSELKAAIDRISDNQNHARLQAQQFEMGVPGVALNDVMLDMQKSSVSLQMGVQVRNRLVAAYQDIMNMQV.

It belongs to the FliE family.

The protein localises to the bacterial flagellum basal body. The chain is Flagellar hook-basal body complex protein FliE from Edwardsiella ictaluri (strain 93-146).